Reading from the N-terminus, the 301-residue chain is F-box protein At4g02733 (301 aa).

The 56-residue stretch at 91–146 (NSISWFLPSELTVKVFSMVDTKSLMQASACCTMFNNCAMDPLCYFHIDLTKAFKHV) folds into the F-box domain.

This Arabidopsis thaliana (Mouse-ear cress) protein is F-box protein At4g02733.